A 100-amino-acid chain; its full sequence is MARKGLIQREKKREKLEQKYRLIRRSSKKEISTAPSLSEKWKIHGKLQSSPRNSAPTRLHRRCFSTGRPRANYRDFRLSGHILREMVHACLLPGATRSSW.

The protein belongs to the universal ribosomal protein uS14 family. Part of the 30S ribosomal subunit.

The protein localises to the plastid. The protein resides in the chloroplast. Binds 16S rRNA, required for the assembly of 30S particles. This chain is Small ribosomal subunit protein uS14c, found in Oenothera argillicola (Appalachian evening primrose).